An 85-amino-acid polypeptide reads, in one-letter code: Large ribosomal subunit protein bL27 (85 aa).

This sequence belongs to the bacterial ribosomal protein bL27 family.

This Azobacteroides pseudotrichonymphae genomovar. CFP2 protein is Large ribosomal subunit protein bL27.